Here is a 443-residue protein sequence, read N- to C-terminus: Mitochondrial enolase superfamily member 1 (443 aa).

Substrate-binding positions include 24-26 (GAD) and Tyr-34. At Ser-148 the chain carries Phosphoserine. Lys-220 contributes to the substrate binding site. The Proton donor/acceptor role is filled by Lys-222. Residue Asp-250 coordinates Mg(2+). Substrate contacts are provided by residues Asn-252, Glu-276, Glu-305, 355–357 (HAG), and Glu-386. Residues Glu-276 and Glu-305 each contribute to the Mg(2+) site. The active site involves His-355.

The protein belongs to the mandelate racemase/muconate lactonizing enzyme family. ENOSF1 subfamily. The cofactor is Mg(2+). In terms of processing, could be sumoylated.

It localises to the mitochondrion. It carries out the reaction L-fuconate = 2-dehydro-3-deoxy-L-fuconate + H2O. Plays a role in the catabolism of L-fucose, a sugar that is part of the carbohydrates that are attached to cellular glycoproteins. Catalyzes the dehydration of L-fuconate to 2-keto-3-deoxy-L-fuconate by the abstraction of the 2-proton to generate an enediolate intermediate that is stabilized by the magnesium ion. The protein is Mitochondrial enolase superfamily member 1 (ENOSF1) of Homo sapiens (Human).